A 461-amino-acid chain; its full sequence is Protein YIG1 (461 aa).

The interval 58–80 (SNVGEDGGDVGNYSEEDDDGDEE) is disordered. Residues 71–80 (SEEDDDGDEE) show a composition bias toward acidic residues.

The protein resides in the cytoplasm. The protein localises to the nucleus. Functionally, involved in the regulation of anaerobiotic glycerol metabolism. In Saccharomyces cerevisiae (strain ATCC 204508 / S288c) (Baker's yeast), this protein is Protein YIG1 (YIG1).